Consider the following 1005-residue polypeptide: Beta/gamma crystallin domain-containing protein 3 (1005 aa).

Residues Ser-122, Ser-129, Ser-130, Ser-136, and Ser-140 each carry the phosphoserine modification. 2 disordered regions span residues 132-159 and 173-198; these read EDVL…PSSV and NFDG…DWRT. Over residues 180-189 the composition is skewed to acidic residues; that stretch reads QEAEEEEEEA. 9 Beta/gamma crystallin 'Greek key' domains span residues 367–416, 462–500, 512–556, 557–599, 605–647, 648–690, 701–737, 738–781, and 828–869; these read GCWI…KRVL, GVWL…HPLQ, LKVI…RVIG, GVWV…RYLQ, SSIT…HVKS, GVWV…RPIQ, HLLK…KVLR, GCWL…QPID, and GLWI…RPMK. The region spanning 871-1003 is the Ricin B-type lectin domain; the sequence is PAVYIRIRNR…GEETQKWDIE (133 aa).

This sequence belongs to the beta/gamma-crystallin family.

The protein is Beta/gamma crystallin domain-containing protein 3 (Crybg3) of Mus musculus (Mouse).